The sequence spans 102 residues: NADH-quinone oxidoreductase subunit K 2 (102 aa).

The next 3 helical transmembrane spans lie at 1 to 21 (MIVP…LGLV), 30 to 50 (IIMM…AFVG), and 65 to 85 (LMIM…VVYL).

The protein belongs to the complex I subunit 4L family. In terms of assembly, NDH-1 is composed of 14 different subunits. Subunits NuoA, H, J, K, L, M, N constitute the membrane sector of the complex.

The protein localises to the cell inner membrane. The enzyme catalyses a quinone + NADH + 5 H(+)(in) = a quinol + NAD(+) + 4 H(+)(out). In terms of biological role, NDH-1 shuttles electrons from NADH, via FMN and iron-sulfur (Fe-S) centers, to quinones in the respiratory chain. The immediate electron acceptor for the enzyme in this species is believed to be ubiquinone. Couples the redox reaction to proton translocation (for every two electrons transferred, four hydrogen ions are translocated across the cytoplasmic membrane), and thus conserves the redox energy in a proton gradient. This is NADH-quinone oxidoreductase subunit K 2 from Geotalea daltonii (strain DSM 22248 / JCM 15807 / FRC-32) (Geobacter daltonii).